The following is a 111-amino-acid chain: Universal stress protein B (111 aa).

2 helical membrane passes run M1–R21 and F90–W110.

This sequence belongs to the universal stress protein B family.

The protein localises to the cell inner membrane. This chain is Universal stress protein B, found in Photorhabdus laumondii subsp. laumondii (strain DSM 15139 / CIP 105565 / TT01) (Photorhabdus luminescens subsp. laumondii).